Here is a 367-residue protein sequence, read N- to C-terminus: tRNA/tmRNA (uracil-C(5))-methyltransferase (367 aa).

5 residues coordinate S-adenosyl-L-methionine: Gln190, Tyr218, Asn223, Glu239, and Asp299. Cys324 (nucleophile) is an active-site residue. Glu358 functions as the Proton acceptor in the catalytic mechanism.

It belongs to the class I-like SAM-binding methyltransferase superfamily. RNA M5U methyltransferase family. TrmA subfamily.

The enzyme catalyses uridine(54) in tRNA + S-adenosyl-L-methionine = 5-methyluridine(54) in tRNA + S-adenosyl-L-homocysteine + H(+). It catalyses the reaction uridine(341) in tmRNA + S-adenosyl-L-methionine = 5-methyluridine(341) in tmRNA + S-adenosyl-L-homocysteine + H(+). Functionally, dual-specificity methyltransferase that catalyzes the formation of 5-methyluridine at position 54 (m5U54) in all tRNAs, and that of position 341 (m5U341) in tmRNA (transfer-mRNA). The polypeptide is tRNA/tmRNA (uracil-C(5))-methyltransferase (Serratia proteamaculans (strain 568)).